We begin with the raw amino-acid sequence, 609 residues long: Numb-like protein (609 aa).

Disordered stretches follow at residues 1-68 (MSRS…QWQA), 223-283 (GSFR…PVAA), 372-421 (ASAG…EEVS), 434-464 (QQQQ…QPFP), and 537-609 (AGAF…EIEL). The span at 19-29 (PPAPCGAPGPP) shows a compositional bias: pro residues. The region spanning 74–223 (RKGTCSFPVR…ASRTSFAREG (150 aa)) is the PID domain. A phosphoserine mark is found at Ser-224 and Ser-228. Positions 233-245 (PAEREAPDKKKAE) are enriched in basic and acidic residues. Residues 246–259 (AAAAPTVAPGPAQP) are compositionally biased toward low complexity. Ser-263 carries the phosphoserine modification. A Phosphothreonine modification is found at Thr-279. Positions 409–418 (TPSEAERWLE) are enriched in basic and acidic residues. Ser-411 is subject to Phosphoserine. Positions 434–446 (QQQQQQQQQQQQQ) are enriched in low complexity. 2 stretches are compositionally biased toward pro residues: residues 454 to 464 (PTMPPALQPFP) and 558 to 573 (NGAP…PAPE).

In terms of assembly, interacts (via PTB domain) with MAP3K7IP2 (via C-terminal). Interacts (via C-terminal) with TRAF6 (via TRAF domains). Associates with EPS15 and NOTCH1.

It is found in the cytoplasm. Functionally, plays a role in the process of neurogenesis. Required throughout embryonic neurogenesis to maintain neural progenitor cells, also called radial glial cells (RGCs), by allowing their daughter cells to choose progenitor over neuronal cell fate. Not required for the proliferation of neural progenitor cells before the onset of embryonic neurogenesis. Also required postnatally in the subventricular zone (SVZ) neurogenesis by regulating SVZ neuroblasts survival and ependymal wall integrity. Negative regulator of NF-kappa-B signaling pathway. The inhibition of NF-kappa-B activation is mediated at least in part, by preventing MAP3K7IP2 to interact with polyubiquitin chains of TRAF6 and RIPK1 and by stimulating the 'Lys-48'-linked polyubiquitination and degradation of TRAF6 in cortical neurons. This chain is Numb-like protein (NUMBL), found in Homo sapiens (Human).